Consider the following 567-residue polypeptide: Proline--tRNA ligase (567 aa).

It belongs to the class-II aminoacyl-tRNA synthetase family. ProS type 1 subfamily. In terms of assembly, homodimer.

The protein localises to the cytoplasm. The catalysed reaction is tRNA(Pro) + L-proline + ATP = L-prolyl-tRNA(Pro) + AMP + diphosphate. In terms of biological role, catalyzes the attachment of proline to tRNA(Pro) in a two-step reaction: proline is first activated by ATP to form Pro-AMP and then transferred to the acceptor end of tRNA(Pro). As ProRS can inadvertently accommodate and process non-cognate amino acids such as alanine and cysteine, to avoid such errors it has two additional distinct editing activities against alanine. One activity is designated as 'pretransfer' editing and involves the tRNA(Pro)-independent hydrolysis of activated Ala-AMP. The other activity is designated 'posttransfer' editing and involves deacylation of mischarged Ala-tRNA(Pro). The misacylated Cys-tRNA(Pro) is not edited by ProRS. The chain is Proline--tRNA ligase from Stenotrophomonas maltophilia (strain R551-3).